Here is a 335-residue protein sequence, read N- to C-terminus: Glyceraldehyde-3-phosphate dehydrogenase 2 (335 aa).

Residues R13–I14, D35, and R80 each bind NAD(+). 2 positions are modified to phosphoserine: S125 and S151. Residue S151–T153 coordinates D-glyceraldehyde 3-phosphate. C152 acts as the Nucleophile in catalysis. A phosphothreonine mark is found at T153, T154, T182, and T184. A D-glyceraldehyde 3-phosphate-binding site is contributed by T182. Residues S192, S203, and S209 each carry the phosphoserine modification. T211 bears the Phosphothreonine mark. D-glyceraldehyde 3-phosphate is bound by residues T211–G212 and R234. T237 bears the Phosphothreonine mark. S241 is subject to Phosphoserine. N316 contributes to the NAD(+) binding site.

It belongs to the glyceraldehyde-3-phosphate dehydrogenase family. Homotetramer.

It is found in the cytoplasm. It catalyses the reaction D-glyceraldehyde 3-phosphate + phosphate + NAD(+) = (2R)-3-phospho-glyceroyl phosphate + NADH + H(+). It participates in carbohydrate degradation; glycolysis; pyruvate from D-glyceraldehyde 3-phosphate: step 1/5. The protein is Glyceraldehyde-3-phosphate dehydrogenase 2 (gpd3) of Schizosaccharomyces pombe (strain 972 / ATCC 24843) (Fission yeast).